The following is a 1047-amino-acid chain: Carbamoyl phosphate synthase arginine-specific large chain (1047 aa).

Residues 1-401 (MPKRTDIQSV…GLQKAVRSLE (401 aa)) are carboxyphosphate synthetic domain. 12 residues coordinate ATP: arginine 129, arginine 169, glycine 175, glycine 176, lysine 208, isoleucine 210, glutamate 215, glycine 241, valine 242, histidine 243, glutamine 284, and glutamate 298. Positions 133 to 327 (RQLMHELHEP…IARMAAKLSL (195 aa)) constitute an ATP-grasp 1 domain. Positions 284, 298, and 300 each coordinate Mg(2+). Mn(2+) contacts are provided by glutamine 284, glutamate 298, and asparagine 300. Residues 402 to 549 (IKTHGLSLPS…YSSWTGENDL (148 aa)) form an oligomerization domain region. A carbamoyl phosphate synthetic domain region spans residues 550 to 933 (LLPEKAKERV…AFRKAFAWGE (384 aa)). An ATP-grasp 2 domain is found at 676-865 (YEFMRSVEVP…LITYTIDVLF (190 aa)). Arginine 712, alanine 750, glutamate 756, glycine 781, valine 782, histidine 783, serine 784, glutamine 824, and glutamate 836 together coordinate ATP. Glutamine 824, glutamate 836, and asparagine 838 together coordinate Mg(2+). Residues glutamine 824, glutamate 836, and asparagine 838 each coordinate Mn(2+). The interval 934 to 1047 (EQTPALFRKK…PFLLPDVVMN (114 aa)) is allosteric domain. Positions 937–1047 (PALFRKKGSV…PFLLPDVVMN (111 aa)) constitute an MGS-like domain.

This sequence belongs to the CarB family. In terms of assembly, composed of two chains; the small (or glutamine) chain promotes the hydrolysis of glutamine to ammonia, which is used by the large (or ammonia) chain to synthesize carbamoyl phosphate. Tetramer of heterodimers (alpha,beta)4. Requires Mg(2+) as cofactor. Mn(2+) serves as cofactor.

It carries out the reaction hydrogencarbonate + L-glutamine + 2 ATP + H2O = carbamoyl phosphate + L-glutamate + 2 ADP + phosphate + 2 H(+). It catalyses the reaction hydrogencarbonate + NH4(+) + 2 ATP = carbamoyl phosphate + 2 ADP + phosphate + 2 H(+). Its pathway is amino-acid biosynthesis; L-arginine biosynthesis; carbamoyl phosphate from bicarbonate: step 1/1. Functionally, large subunit of the glutamine-dependent carbamoyl phosphate synthetase (CPSase). CPSase catalyzes the formation of carbamoyl phosphate from the ammonia moiety of glutamine, carbonate, and phosphate donated by ATP, constituting the first step of the biosynthetic pathway leading to arginine and/or urea. The large subunit (synthetase) binds the substrates ammonia (free or transferred from glutamine from the small subunit), hydrogencarbonate and ATP and carries out an ATP-coupled ligase reaction, activating hydrogencarbonate by forming carboxy phosphate which reacts with ammonia to form carbamoyl phosphate. The chain is Carbamoyl phosphate synthase arginine-specific large chain from Halalkalibacterium halodurans (strain ATCC BAA-125 / DSM 18197 / FERM 7344 / JCM 9153 / C-125) (Bacillus halodurans).